The sequence spans 433 residues: Glutamyl-tRNA reductase (433 aa).

Substrate is bound by residues 49-52 (TCNR), serine 109, 114-116 (EGQ), and glutamine 120. The Nucleophile role is filled by cysteine 50. 198-203 (GAGRMS) contributes to the NADP(+) binding site.

This sequence belongs to the glutamyl-tRNA reductase family. Homodimer.

The enzyme catalyses (S)-4-amino-5-oxopentanoate + tRNA(Glu) + NADP(+) = L-glutamyl-tRNA(Glu) + NADPH + H(+). It functions in the pathway porphyrin-containing compound metabolism; protoporphyrin-IX biosynthesis; 5-aminolevulinate from L-glutamyl-tRNA(Glu): step 1/2. It participates in porphyrin-containing compound metabolism; chlorophyll biosynthesis. In terms of biological role, catalyzes the NADPH-dependent reduction of glutamyl-tRNA(Glu) to glutamate 1-semialdehyde (GSA). The chain is Glutamyl-tRNA reductase from Prochlorococcus marinus subsp. pastoris (strain CCMP1986 / NIES-2087 / MED4).